The chain runs to 1397 residues: MKDLLDIMRKKTDSDGHAPVEFDRIRIGLASPEMIKSWSHGEVKKPETINYRTFKPERDGLFCAKIFGPVKDYECLCGKYKRMKYKGVICEKCGVEVTTAKVRRERMGHIELASPVAHIWFLKSLPSRIGLLLDMTLRDIERVLYFESYVVTDPGMTPFEKYQLLNDEEYFTALEEHGDEFVAKMGAEAVQDLLKDIDLEAEISRLREEIPQTTSETKLKKASKRLKLMEAFKDSNNKPEWMVMNVLPVLPPDLRPLVPLEGGRFATSDLNDLYRRVINRNNRLKRLLDLAAPDIIVRNEKRMLQESVDALLDNGRRGRAITGSNKRPLKSLADMIKGKQGRFRQNLLGKRVDYSGRSVITVGPTLRLHQCGLPKKMALELFKPFIFAKLQASGQATTIKAAKKMVERETPEVWDVLASVIRQHPVMLNRAPTLHRLGLQAFEPILIEGKAIRLHPLVCAAFNADFDGDQMAVHVPLTLEAQLEARALMMSTNNILSPANGEPIIVPSQDVVLGLYYITRDAVNAKGEGMVFADTHEVNRALATGQVAIHARVKVRVHQTVINENGEREQQTIIVDTTPGRCLLWEVVPEGLSFDMINLEMTKKNISKLINSCYRKLGLKDTVIFADQLMYLGFRQATRSGVSVGMEDMLIPPTKHTIIDKAETEVREIEQQFEQGFVTAGERYNKVVDIWARTNDQVAKAMMDNLSYTLVKNKQGEDEKQKSFNSIYMMSDSGARGSAAQIRQLAGMRGLMAKPDGSIIETPIKANFREGLTVLQYFISTHGARKGLADTALKTANSGYLTRRLVDVAQDLVITEPDCGTSGGLVMTPFIQGGDVIEPLRDRVLGRVTAEDVRRASDDEVVLPRGTLIDEKIAAQLEEAGVDEVKVRSVIACESTFGVCAKCYGRDLARGHLVNPGESVGVMAAQSIGEPGTQLTMRTFHVGGAASRTSAANSVQVRNKGTVRFHNVKTVQHAKGHLVSVSRSGEIGIADELGRERERYKLPYGASILLKDGELVEAGGIVATWDPHTHPLVTEVAGKARFSQIADGVTATSKTDDATGMTTVEILPVTARPASGKDLRPAIVLDTTDGGEQFYFLPQNTIVTVRDGETIGVGDVIGRVPQESSRTRDITGGLPRVADLFEARKPKEHAILAEVSGIVSFGKETKGKNRLVITPDDGSEIYEELIPKWRQINVFEGEHVNRGETISDGPQNPHDILRLKGEVALTNYIVNEVQDVYRLQGVKINDKHIEVIVRQMLRKVDIIDGGDTSFIKGEQVDYIRVVQENQAVLAQNKFPAKFERQLMGITKASLSTDSFISAASFQETTRVLTEAAVTGKEDDLRGLKENVVVGRLIPAGTGLAYHLERRRQEAEAAEHALHNDFSEVDQAFSQALNSEQF.

Cys75, Cys77, Cys90, and Cys93 together coordinate Zn(2+). Positions 465, 467, and 469 each coordinate Mg(2+). Zn(2+) contacts are provided by Cys819, Cys893, Cys900, and Cys903.

This sequence belongs to the RNA polymerase beta' chain family. The RNAP catalytic core consists of 2 alpha, 1 beta, 1 beta' and 1 omega subunit. When a sigma factor is associated with the core the holoenzyme is formed, which can initiate transcription. Mg(2+) serves as cofactor. Zn(2+) is required as a cofactor.

The enzyme catalyses RNA(n) + a ribonucleoside 5'-triphosphate = RNA(n+1) + diphosphate. DNA-dependent RNA polymerase catalyzes the transcription of DNA into RNA using the four ribonucleoside triphosphates as substrates. The polypeptide is DNA-directed RNA polymerase subunit beta' (Acinetobacter baumannii (strain ACICU)).